Reading from the N-terminus, the 508-residue chain is Photosystem II CP47 reaction center protein (508 aa).

6 helical membrane-spanning segments follow: residues 21–36 (SVHI…WAGS), 101–115 (IVFS…IWHW), 140–156 (GIHL…FGAF), 203–218 (IAAG…FHLS), 237–252 (VLSS…AFIV), and 457–472 (TFAL…HGAR).

The protein belongs to the PsbB/PsbC family. PsbB subfamily. PSII is composed of 1 copy each of membrane proteins PsbA, PsbB, PsbC, PsbD, PsbE, PsbF, PsbH, PsbI, PsbJ, PsbK, PsbL, PsbM, PsbT, PsbX, PsbY, PsbZ, Psb30/Ycf12, at least 3 peripheral proteins of the oxygen-evolving complex and a large number of cofactors. It forms dimeric complexes. Requires Binds multiple chlorophylls. PSII binds additional chlorophylls, carotenoids and specific lipids. as cofactor.

It is found in the plastid. The protein resides in the chloroplast thylakoid membrane. One of the components of the core complex of photosystem II (PSII). It binds chlorophyll and helps catalyze the primary light-induced photochemical processes of PSII. PSII is a light-driven water:plastoquinone oxidoreductase, using light energy to abstract electrons from H(2)O, generating O(2) and a proton gradient subsequently used for ATP formation. The protein is Photosystem II CP47 reaction center protein of Pinus thunbergii (Japanese black pine).